The following is a 357-amino-acid chain: S-adenosylmethionine:tRNA ribosyltransferase-isomerase (357 aa).

This sequence belongs to the QueA family. As to quaternary structure, monomer.

Its subcellular location is the cytoplasm. The enzyme catalyses 7-aminomethyl-7-carbaguanosine(34) in tRNA + S-adenosyl-L-methionine = epoxyqueuosine(34) in tRNA + adenine + L-methionine + 2 H(+). The protein operates within tRNA modification; tRNA-queuosine biosynthesis. In terms of biological role, transfers and isomerizes the ribose moiety from AdoMet to the 7-aminomethyl group of 7-deazaguanine (preQ1-tRNA) to give epoxyqueuosine (oQ-tRNA). The chain is S-adenosylmethionine:tRNA ribosyltransferase-isomerase from Hamiltonella defensa subsp. Acyrthosiphon pisum (strain 5AT).